The chain runs to 538 residues: Eukaryotic translation initiation factor 3 subunit L (538 aa).

The 209-residue stretch at 305–513 (TFSDILLYIQ…IHIADTKVSH (209 aa)) folds into the PCI domain.

Belongs to the eIF-3 subunit L family. In terms of assembly, component of the eukaryotic translation initiation factor 3 (eIF-3) complex. The eIF-3 complex interacts with pix.

The protein localises to the cytoplasm. In terms of biological role, component of the eukaryotic translation initiation factor 3 (eIF-3) complex, which is involved in protein synthesis of a specialized repertoire of mRNAs and, together with other initiation factors, stimulates binding of mRNA and methionyl-tRNAi to the 40S ribosome. The eIF-3 complex specifically targets and initiates translation of a subset of mRNAs involved in cell proliferation. In Drosophila mojavensis (Fruit fly), this protein is Eukaryotic translation initiation factor 3 subunit L.